A 101-amino-acid chain; its full sequence is Small ribosomal subunit protein uS14 (101 aa).

Belongs to the universal ribosomal protein uS14 family. In terms of assembly, part of the 30S ribosomal subunit. Contacts proteins S3 and S10.

Binds 16S rRNA, required for the assembly of 30S particles and may also be responsible for determining the conformation of the 16S rRNA at the A site. The protein is Small ribosomal subunit protein uS14 of Ehrlichia chaffeensis (strain ATCC CRL-10679 / Arkansas).